A 1093-amino-acid polypeptide reads, in one-letter code: MAGAAGLTAEVSWKVLERRARTKRSGSVYEPLKSINLPRPDNETLWDKLDHYYRIVKSTLLLYQSPTTGLFPTKTCGGDQKAKIQDSLYCAAGAWALALAYRRIDDDKGRTHELEHSAIKCMRGILYCYMRQADKVQQFKQDPRPTTCLHSVFNVHTGDELLSYEEYGHLQINAVSLYLLYLVEMISSGLQIIYNTDEVSFIQNLVFCVERVYRVPDFGVWERGSKYNNGSTELHSSSVGLAKAALEAINGFNLFGNQGCSWSVIFVDLDAHNRNRQTLCSLLPRESRSHNTDAALLPCISYPAFALDDEVLFSQTLDKVVRKLKGKYGFKRFLRDGYRTSLEDPNRCYYKPAEIKLFDGIECEFPIFFLYMMIDGVFRGNPKQVQEYQDLLTPVLHHTTEGYPVVPKYYYVPADFVEYEKNNPGSQKRFPSNCGRDGKLFLWGQALYIIAKLLADELISPKDIDPVQRYVPLKDQRNVSMRFSNQGPLENDLVVHVALIAESQRLQVFLNTYGIQTQTPQQVEPIQIWPQQELVKAYLQLGINEKLGLSGRPDRPIGCLGTSKIYRILGKTVVCYPIIFDLSDFYMSQDVFLLIDDIKNALQFIKQYWKMHGRPLFLVLIREDNIRGSRFNPILDMLAALKKGIIGGVKVHVDRLQTLISGAVVEQLDFLRISDTEELPEFKSFEELEPPKHSKVKRQSSTPSAPELGQQPDVNISEWKDKPTHEILQKLNDCSCLASQAILLGILLKREGPNFITKEGTVSDHIERVYRRAGSQKLWLAVRYGAAFTQKFSSSIAPHITTFLVHGKQVTLGAFGHEEEVISNPLSPRVIQNIIYYKCNTHDEREAVIQQELVIHIGWIISNNPELFSGMLKIRIGWIIHAMEYELQIRGGDKPALDLYQLSPSEVKQLLLDILQPQQNGRCWLNRRQIDGSLNRTPTGFYDRVWQILERTPNGIIVAGKHLPQQPTLSDMTMYEMNFSLLVEDTLGNIDQPQYRQIVVELLMVVSIVLERNPELEFQDKVDLDRLVKEAFNEFQKDQSRLKEIEKQDDMTSFYNTPPLGKRGTCSYLTKAVMNLLLEGEVKPNNDDPCLIS.

At A2 the chain carries N-acetylalanine. Residue A4 is modified to Phosphoserine. Residues 7 to 29 are calmodulin-binding; the sequence is LTAEVSWKVLERRARTKRSGSVY. A Phosphoserine; by autocatalysis modification is found at S12. Phosphoserine is present on residues S27 and S701. The interval 689–716 is disordered; the sequence is EPPKHSKVKRQSSTPSAPELGQQPDVNI. 2 calmodulin-binding regions span residues 768–795 and 920–951; these read RVYR…FSSS and NGRC…ILER. C1090 is lipidated: S-farnesyl cysteine.

Belongs to the phosphorylase b kinase regulatory chain family. As to quaternary structure, hexadecamer of 4 heterotetramers, each composed of alpha, beta, gamma, and delta subunits. Alpha (PHKA1 or PHKA2) and beta (PHKB) are regulatory subunits, gamma (PHKG1 or PHKG2) is the catalytic subunit, and delta is calmodulin. Ser-701 is probably phosphorylated by PKA. Post-translationally, although the final Cys may be farnesylated, the terminal tripeptide is probably not removed, and the C-terminus is not methylated.

Its subcellular location is the cell membrane. Its pathway is glycan biosynthesis; glycogen metabolism. With respect to regulation, by phosphorylation of various serine residues. Functionally, phosphorylase b kinase catalyzes the phosphorylation of serine in certain substrates, including troponin I. The beta chain acts as a regulatory unit and modulates the activity of the holoenzyme in response to phosphorylation. This Homo sapiens (Human) protein is Phosphorylase b kinase regulatory subunit beta (PHKB).